Reading from the N-terminus, the 270-residue chain is Methylthioribulose-1-phosphate dehydratase (270 aa).

Substrate is bound at residue cysteine 122. Zn(2+)-binding residues include histidine 140 and histidine 142. Glutamate 165 functions as the Proton donor/acceptor in the catalytic mechanism. Histidine 230 contributes to the Zn(2+) binding site.

This sequence belongs to the aldolase class II family. MtnB subfamily. Zn(2+) serves as cofactor.

Its subcellular location is the cytoplasm. The catalysed reaction is 5-(methylsulfanyl)-D-ribulose 1-phosphate = 5-methylsulfanyl-2,3-dioxopentyl phosphate + H2O. The protein operates within amino-acid biosynthesis; L-methionine biosynthesis via salvage pathway; L-methionine from S-methyl-5-thio-alpha-D-ribose 1-phosphate: step 2/6. Functionally, catalyzes the dehydration of methylthioribulose-1-phosphate (MTRu-1-P) into 2,3-diketo-5-methylthiopentyl-1-phosphate (DK-MTP-1-P). This Candida albicans (strain SC5314 / ATCC MYA-2876) (Yeast) protein is Methylthioribulose-1-phosphate dehydratase.